Here is a 652-residue protein sequence, read N- to C-terminus: MDAGGEEEKQERHRVDGASPSMVALRSDVLHAVLGGKSHNQDTSELVTLSEWSKNKFPLYAYAAAFMFLVMQEYDKRSHGIDFLNRDFVVRDLGMPSLNKHFPVKEFYCSYRRKSGHSTYTYGFFMLQKLILIQNAHIRREEEEEGACSMVTTSHRTGHSRSVGLAARDDPTAEMRLVQGEGSVGTTSHRMGALLERWISREGRTDGGDTSVQGERSVGTTSHRMGALLDVGSAVDDPAKQRSAMGNSLPVESKFTDEKENDRIKYVVSSMQGWGEKMEDAHAAILNLDDTMTSFFGVYDGHGGAEVASYCAKRFHIELCNHEDYDSNLSNAMRSAFYSMDEDLQLSDAWRELVIPRNNGWMYFLKAAACTSICKATYTEPAYEGSTACVVVIRGNQLIVGHAGDSRCVLSRNGQASALSVDHKPDRDFACKKNERLPPEDQMLTCNPDILTMDITDDMEFLVIATEGLWCNMTNQNVVDHTHDRLLEGAEARVICEELVQFGLPSGDNTTVILVLFKPGAYPAVPPVDTDTDTDSHTGDDVDNNDPANEVDPTANAGSDDSNTSDEVKVDATATAVGSSSTTAVAADEATVVSLSTATITIVDNYFFINTSEEVDPTANAGSDDSNTGDEVKVDATASSGLSDWELIYSEF.

The region spanning 265-517 (KYVVSSMQGW…DNTTVILVLF (253 aa)) is the PPM-type phosphatase domain. The Mn(2+) site is built by aspartate 300, glycine 301, glutamate 467, and aspartate 508. The interval 524–567 (AVPPVDTDTDTDSHTGDDVDNNDPANEVDPTANAGSDDSNTSDE) is disordered.

The protein belongs to the PP2C family. It depends on Mg(2+) as a cofactor. Mn(2+) is required as a cofactor.

It carries out the reaction O-phospho-L-seryl-[protein] + H2O = L-seryl-[protein] + phosphate. The catalysed reaction is O-phospho-L-threonyl-[protein] + H2O = L-threonyl-[protein] + phosphate. This chain is Probable protein phosphatase 2C 19, found in Oryza sativa subsp. japonica (Rice).